A 197-amino-acid polypeptide reads, in one-letter code: dITP/XTP pyrophosphatase (197 aa).

8 to 13 (TGNPGK) is a substrate binding site. Positions 40 and 69 each coordinate Mg(2+). D69 functions as the Proton acceptor in the catalytic mechanism. Substrate contacts are provided by residues S70, 154 to 157 (FGYD), K177, and 182 to 183 (HR).

It belongs to the HAM1 NTPase family. Homodimer. The cofactor is Mg(2+).

The enzyme catalyses XTP + H2O = XMP + diphosphate + H(+). The catalysed reaction is dITP + H2O = dIMP + diphosphate + H(+). It carries out the reaction ITP + H2O = IMP + diphosphate + H(+). Its function is as follows. Pyrophosphatase that catalyzes the hydrolysis of nucleoside triphosphates to their monophosphate derivatives, with a high preference for the non-canonical purine nucleotides XTP (xanthosine triphosphate), dITP (deoxyinosine triphosphate) and ITP. Seems to function as a house-cleaning enzyme that removes non-canonical purine nucleotides from the nucleotide pool, thus preventing their incorporation into DNA/RNA and avoiding chromosomal lesions. This is dITP/XTP pyrophosphatase from Yersinia pseudotuberculosis serotype I (strain IP32953).